Here is a 375-residue protein sequence, read N- to C-terminus: Carboxypeptidase O (375 aa).

The signal sequence occupies residues 1-20 (MKPLLGTFYLLGMLVPGWLG). Positions 50–345 (RYHPMGEIYQ…EAVLSVLDDV (296 aa)) constitute a Peptidase M14 domain. Positions 109 and 112 each coordinate Zn(2+). Asn175 carries an N-linked (GlcNAc...) asparagine glycan. His237 serves as a coordination point for Zn(2+). Residue Asn252 is glycosylated (N-linked (GlcNAc...) asparagine). Residue Glu311 is the Proton donor/acceptor of the active site. Asn315 carries N-linked (GlcNAc...) asparagine glycosylation. Residue Ser354 is the site of GPI-anchor amidated serine attachment. A propeptide spans 355–375 (ARKAKSTALVLGLLMSFMSLL) (removed in mature form).

It belongs to the peptidase M14 family. It depends on Zn(2+) as a cofactor.

The protein localises to the apical cell membrane. Carboxypeptidase which preferentially cleaves C-terminal acidic residues from peptides and proteins. Can also cleave C-terminal hydrophobic amino acids, with a preference for small residues over large residues. This Bos taurus (Bovine) protein is Carboxypeptidase O.